A 165-amino-acid chain; its full sequence is Large ribosomal subunit protein uL11 (165 aa).

Phosphoserine is present on serine 38. Lysine 40 participates in a covalent cross-link: Glycyl lysine isopeptide (Lys-Gly) (interchain with G-Cter in SUMO2). A Glycyl lysine isopeptide (Lys-Gly) (interchain with G-Cter in ubiquitin) cross-link involves residue lysine 48. Residue lysine 54 is modified to N6-acetyllysine. Residue lysine 83 forms a Glycyl lysine isopeptide (Lys-Gly) (interchain with G-Cter in ubiquitin) linkage. A Phosphoserine modification is found at serine 165.

Belongs to the universal ribosomal protein uL11 family. As to quaternary structure, component of the large ribosomal subunit. Mature ribosomes consist of a small (40S) and a large (60S) subunit. The 40S subunit contains about 33 different proteins and 1 molecule of RNA (18S). The 60S subunit contains about 49 different proteins and 3 molecules of RNA (28S, 5.8S and 5S). In terms of processing, ubiquitinated at Lys-48 and Lys-83 by RNF14 and RNF25 in response to ribosome collisions (ribosome stalling).

It localises to the cytoplasm. Functionally, component of the large ribosomal subunit. The ribosome is a large ribonucleoprotein complex responsible for the synthesis of proteins in the cell. Binds directly to 26S ribosomal RNA. This chain is Large ribosomal subunit protein uL11 (Rpl12), found in Rattus norvegicus (Rat).